The chain runs to 291 residues: Ribosomal RNA small subunit methyltransferase I (291 aa).

This sequence belongs to the methyltransferase superfamily. RsmI family.

It localises to the cytoplasm. It carries out the reaction cytidine(1402) in 16S rRNA + S-adenosyl-L-methionine = 2'-O-methylcytidine(1402) in 16S rRNA + S-adenosyl-L-homocysteine + H(+). Catalyzes the 2'-O-methylation of the ribose of cytidine 1402 (C1402) in 16S rRNA. The protein is Ribosomal RNA small subunit methyltransferase I of Neisseria meningitidis serogroup B (strain ATCC BAA-335 / MC58).